The following is an 800-amino-acid chain: MAETAAGLCRFKANYAVERKIEPFYKGGKAQLDQTGRHLFCVCGTKVNILDVASGDLIRSLEQEDQEDITAFDLSPDDEVLVTASRALLLAQWAWREGTVARLWKAIHTAPVASMAFDATSTLLATGGCDGAVRVWDIVQHYGTHHFRGSPGVVHLVAFHPDPTRLLLFSSAVDTSIRVWSLQDRSCLAVLTAHYSAVTSLSFSEDGHTMLSSGRDKICIVWDLRSYETSRTVPVFESVEASVLLPEEPALALGVKNSGLHFLTAGDQGILRVWEAASGQCVYTQPQMSGLRQELTHCTLARAAGLLLTVTADHNLLLYEARSLQLQKQFAGYSEEVLDVRFLGPNDSHIIVASNSPCLKVFELQTLACQILHGHTDIVLALDVFRKGWLFASCAKDQSIRIWRMNKAGQVACVAQGSGHTHSVGTICCSRLKESFLVTGSQDCTVKLWPLPEALPSKNTASDGDLIPLQAQSTQRCHDKDINSLAVSPNDKLLATGSQDRTAKLWALPQCQLLGVFSGHRRGLWNVQFSPTDQVLATASADGTIKLWALQDFSCLKTFEGHDASVLKVAFVSRGAQLLSSGSDGLLKLWTIKSNECVRTLDAHEDKVWGLHCSRLDDHAITGGSDSRIILWKDVTEAEQAEEQAKREEQVIKQQELDNLLHEKRYLRALGLAISLDRPHTVLTVIQAIRRDPEACEKLEATVLRLRRDQKEALLRFCITWNTNSRHCHEAQAVLGVLLRHEAPEELLAYDGVRGALEALLPYTERHFQRLSRTLQAATFLDFLWHNMKLSPLPAAPPAL.

Residue Ala2 is modified to N-acetylalanine. 13 WD repeats span residues 64-105 (EDQE…RLWK), 107-146 (IHTAPVASMAFDATSTLLATGGCDGAVRVWDIVQHYGTHH), 149-190 (GSPG…CLAV), 193-232 (AHYSAVTSLSFSEDGHTMLSSGRDKICIVWDLRSYETSRT), 245-284 (LPEEPALALGVKNSGLHFLTAGDQGILRVWEAASGQCVYT), 290-329 (GLRQELTHCTLARAAGLLLTVTADHNLLLYEARSLQLQKQ), 332-372 (GYSE…CQIL), 374-413 (GHTDIVLALDVFRKGWLFASCAKDQSIRIWRMNKAGQVAC), 419-459 (GHTH…PSKN), 477-516 (CHDKDINSLAVSPNDKLLATGSQDRTAKLWALPQCQLLGV), 519-560 (GHRR…KTFE), 562-602 (HDAS…RTLD), and 604-642 (HEDKVWGLHCSRLDDHAITGGSDSRIILWKDVTEAEQAE). Residue Lys407 forms a Glycyl lysine isopeptide (Lys-Gly) (interchain with G-Cter in SUMO2) linkage.

As to quaternary structure, part of the small subunit (SSU) processome, composed of more than 70 proteins and the RNA chaperone small nucleolar RNA (snoRNA) U3.

The protein resides in the nucleus. Its subcellular location is the nucleolus. Its function is as follows. Part of the small subunit (SSU) processome, first precursor of the small eukaryotic ribosomal subunit. During the assembly of the SSU processome in the nucleolus, many ribosome biogenesis factors, an RNA chaperone and ribosomal proteins associate with the nascent pre-rRNA and work in concert to generate RNA folding, modifications, rearrangements and cleavage as well as targeted degradation of pre-ribosomal RNA by the RNA exosome. The protein is Transducin beta-like protein 3 (Tbl3) of Rattus norvegicus (Rat).